The sequence spans 83 residues: MVTIRLARGGSKKRPFYHLTVTNSRNARDGRFVERVGFFNPIAAGAEVKLSVNQERVSYWLSQGAQPSERVAQLLKDAAKAAA.

This sequence belongs to the bacterial ribosomal protein bS16 family.

This chain is Small ribosomal subunit protein bS16, found in Pseudomonas putida (strain W619).